Here is an 84-residue protein sequence, read N- to C-terminus: Phosphoribosylformylglycinamidine synthase subunit PurS (84 aa).

The protein belongs to the PurS family. As to quaternary structure, homodimer or homotetramer. Part of the FGAM synthase complex composed of 1 PurL, 1 PurQ and 2 PurS subunits.

The protein localises to the cytoplasm. It catalyses the reaction N(2)-formyl-N(1)-(5-phospho-beta-D-ribosyl)glycinamide + L-glutamine + ATP + H2O = 2-formamido-N(1)-(5-O-phospho-beta-D-ribosyl)acetamidine + L-glutamate + ADP + phosphate + H(+). Its pathway is purine metabolism; IMP biosynthesis via de novo pathway; 5-amino-1-(5-phospho-D-ribosyl)imidazole from N(2)-formyl-N(1)-(5-phospho-D-ribosyl)glycinamide: step 1/2. Its function is as follows. Part of the phosphoribosylformylglycinamidine synthase complex involved in the purines biosynthetic pathway. Catalyzes the ATP-dependent conversion of formylglycinamide ribonucleotide (FGAR) and glutamine to yield formylglycinamidine ribonucleotide (FGAM) and glutamate. The FGAM synthase complex is composed of three subunits. PurQ produces an ammonia molecule by converting glutamine to glutamate. PurL transfers the ammonia molecule to FGAR to form FGAM in an ATP-dependent manner. PurS interacts with PurQ and PurL and is thought to assist in the transfer of the ammonia molecule from PurQ to PurL. The sequence is that of Phosphoribosylformylglycinamidine synthase subunit PurS from Bacillus subtilis (strain 168).